We begin with the raw amino-acid sequence, 100 residues long: Large ribosomal subunit protein uL23 (100 aa).

This sequence belongs to the universal ribosomal protein uL23 family. Part of the 50S ribosomal subunit. Contacts protein L29, and trigger factor when it is bound to the ribosome.

Its function is as follows. One of the early assembly proteins it binds 23S rRNA. One of the proteins that surrounds the polypeptide exit tunnel on the outside of the ribosome. Forms the main docking site for trigger factor binding to the ribosome. The polypeptide is Large ribosomal subunit protein uL23 (Novosphingobium aromaticivorans (strain ATCC 700278 / DSM 12444 / CCUG 56034 / CIP 105152 / NBRC 16084 / F199)).